A 454-amino-acid polypeptide reads, in one-letter code: Pup--protein ligase (454 aa).

Position 9 (Glu9) interacts with Mg(2+). Arg53 contacts ATP. Tyr55 contributes to the Mg(2+) binding site. Asp57 (proton acceptor) is an active-site residue. Glu63 serves as a coordination point for Mg(2+). ATP contacts are provided by Thr66 and Trp421.

This sequence belongs to the Pup ligase/Pup deamidase family. Pup-conjugating enzyme subfamily.

The catalysed reaction is ATP + [prokaryotic ubiquitin-like protein]-L-glutamate + [protein]-L-lysine = ADP + phosphate + N(6)-([prokaryotic ubiquitin-like protein]-gamma-L-glutamyl)-[protein]-L-lysine.. It functions in the pathway protein degradation; proteasomal Pup-dependent pathway. The protein operates within protein modification; protein pupylation. Catalyzes the covalent attachment of the prokaryotic ubiquitin-like protein modifier Pup to the proteasomal substrate proteins, thereby targeting them for proteasomal degradation. This tagging system is termed pupylation. The ligation reaction involves the side-chain carboxylate of the C-terminal glutamate of Pup and the side-chain amino group of a substrate lysine. The protein is Pup--protein ligase of Frankia casuarinae (strain DSM 45818 / CECT 9043 / HFP020203 / CcI3).